The following is a 586-amino-acid chain: Heterogeneous nuclear ribonucleoprotein L (586 aa).

The span at 1 to 16 (MSRRLLPRAEKRRRRL) shows a compositional bias: basic residues. The disordered stretch occupies residues 1–97 (MSRRLLPRAE…NYDDPHKTPA (97 aa)). Basic and acidic residues predominate over residues 17–27 (EQRQQPDEQLR). The segment covering 28 to 37 (RAGAMVKMAA) has biased composition (low complexity). The span at 38-54 (AGGGGGGGRYYGGGNEG) shows a compositional bias: gly residues. Residues Lys59 and Lys62 each participate in a glycyl lysine isopeptide (Lys-Gly) (interchain with G-Cter in SUMO2) cross-link. The segment covering 69-87 (QHGGGGGGGSGAAGGGGGE) has biased composition (gly residues). Ser98 carries the post-translational modification Phosphoserine. Positions 99–173 (PVVHIRGLID…HPAFVNYSTS (75 aa)) constitute an RRM 1 domain. A Glycyl lysine isopeptide (Lys-Gly) (interchain with G-Cter in SUMO2) cross-link involves residue Lys133. Ser182 carries the phosphoserine modification. The RRM 2 domain occupies 190-267 (SVLLFTILNP…CTLKIEYAKP (78 aa)). Lys266 carries the N6-acetyllysine modification. The segment covering 281 to 298 (DYTNPNLSGQGDPGSNPN) has biased composition (polar residues). The interval 281–376 (DYTNPNLSGQ…PPPPDYGPHA (96 aa)) is disordered. Phosphoserine is present on residues Ser288 and Ser295. A Glycyl lysine isopeptide (Lys-Gly) (interchain with G-Cter in SUMO2) cross-link involves residue Lys299. An asymmetric dimethylarginine mark is found at Arg351 and Arg355. Positions 361-372 (GHPPPPPPPPDY) are enriched in pro residues. A Phosphoserine modification is found at Ser378. RRM domains follow at residues 379-476 (PVLM…DFSE) and 492-580 (RIQH…LCFS). Ser541 carries the post-translational modification Phosphoserine; by CaMK4. A Glycyl lysine isopeptide (Lys-Gly) (interchain with G-Cter in SUMO2) cross-link involves residue Lys565.

Identified in a IGF2BP1-dependent mRNP granule complex containing untranslated mRNAs. Interacts with HNRNPLL. Interacts with APEX1; the interaction is DNA-dependent. Component of a complex with SETD2. Interacts with ELAVL1. Part of a transcription inhibitory ribonucleoprotein complex composed at least of the circular RNA circZNF827, ZNF827 and HNRNPK. Interacts with CHD8 in an RNA-dependent manner. Post-translationally, phosphorylation at Ser-541 by CaMK4 enhances interaction with a CaMK4-responsive RNA element (CaRRE1), and prevents inclusion of the stress axis-regulated exon (STREX) of the KCNMA1 potassium channel transcripts upon membrane depolarization. Detected in hematopoietic cells, including lymphoid progenitor cells.

The protein resides in the nucleus. The protein localises to the nucleoplasm. It is found in the cytoplasm. Functionally, splicing factor binding to exonic or intronic sites and acting as either an activator or repressor of exon inclusion. Exhibits a binding preference for CA-rich elements. Component of the heterogeneous nuclear ribonucleoprotein (hnRNP) complexes and associated with most nascent transcripts. Associates, together with APEX1, to the negative calcium responsive element (nCaRE) B2 of the APEX2 promoter. As part of a ribonucleoprotein complex composed at least of ZNF827, HNRNPK and the circular RNA circZNF827 that nucleates the complex on chromatin, may negatively regulate the transcription of genes involved in neuronal differentiation. Regulates alternative splicing of a core group of genes involved in neuronal differentiation, likely by mediating H3K36me3-coupled transcription elongation and co-transcriptional RNA processing via interaction with CHD8. This is Heterogeneous nuclear ribonucleoprotein L (Hnrnpl) from Mus musculus (Mouse).